Consider the following 195-residue polypeptide: Inosine triphosphate pyrophosphatase (195 aa).

An ITP-binding site is contributed by 13–18 (TGNAKK). Mg(2+) is bound at residue Glu-43. ITP-binding positions include Lys-55, 71-72 (DT), Lys-88, 148-151 (FGWD), Lys-171, and 176-177 (HR).

Belongs to the HAM1 NTPase family. In terms of assembly, homodimer. The cofactor is Mg(2+). Requires Mn(2+) as cofactor.

The protein resides in the cytoplasm. The catalysed reaction is ITP + H2O = IMP + diphosphate + H(+). It carries out the reaction dITP + H2O = dIMP + diphosphate + H(+). The enzyme catalyses XTP + H2O = XMP + diphosphate + H(+). It catalyses the reaction N(6)-hydroxy-dATP + H2O = N(6)-hydroxy-dAMP + diphosphate + H(+). Functionally, pyrophosphatase that hydrolyzes the non-canonical purine nucleotides inosine triphosphate (ITP), deoxyinosine triphosphate (dITP) as well as 2'-deoxy-N-6-hydroxylaminopurine triphosphate (dHAPTP) and xanthosine 5'-triphosphate (XTP) to their respective monophosphate derivatives. The enzyme does not distinguish between the deoxy- and ribose forms. Probably excludes non-canonical purines from RNA and DNA precursor pools, thus preventing their incorporation into RNA and DNA and avoiding chromosomal lesions. The sequence is that of Inosine triphosphate pyrophosphatase (itpa) from Xenopus laevis (African clawed frog).